Reading from the N-terminus, the 178-residue chain is CD209 antigen-like protein C (178 aa).

C48 and C59 are disulfide-bonded. A C-type lectin domain is found at 54-169; sequence VFQGNCYFFS…CTIKKYWICK (116 aa). A glycan (N-linked (GlcNAc...) asparagine) is linked at N70. Intrachain disulfides connect C76-C168 and C147-C160. Ca(2+) contacts are provided by E138, N140, E145, N156, and D157.

Functionally, probable pathogen-recognition receptor. May recognize in a calcium-dependent manner high mannose N-linked oligosaccharides in a variety of pathogen antigens. The polypeptide is CD209 antigen-like protein C (Cd209c) (Mus musculus (Mouse)).